Here is a 195-residue protein sequence, read N- to C-terminus: Probable nicotinate-nucleotide adenylyltransferase (195 aa).

This sequence belongs to the NadD family.

It catalyses the reaction nicotinate beta-D-ribonucleotide + ATP + H(+) = deamido-NAD(+) + diphosphate. It functions in the pathway cofactor biosynthesis; NAD(+) biosynthesis; deamido-NAD(+) from nicotinate D-ribonucleotide: step 1/1. Its function is as follows. Catalyzes the reversible adenylation of nicotinate mononucleotide (NaMN) to nicotinic acid adenine dinucleotide (NaAD). This Gluconobacter oxydans (strain 621H) (Gluconobacter suboxydans) protein is Probable nicotinate-nucleotide adenylyltransferase.